Here is a 216-residue protein sequence, read N- to C-terminus: Uracil phosphoribosyltransferase (216 aa).

5-phospho-alpha-D-ribose 1-diphosphate is bound by residues Arg-85, Arg-110, and 135 to 143 (DPMVATGYS). Uracil is bound by residues Ile-200 and 205–207 (GDA). Asp-206 lines the 5-phospho-alpha-D-ribose 1-diphosphate pocket.

This sequence belongs to the UPRTase family. Mg(2+) is required as a cofactor.

The catalysed reaction is UMP + diphosphate = 5-phospho-alpha-D-ribose 1-diphosphate + uracil. It participates in pyrimidine metabolism; UMP biosynthesis via salvage pathway; UMP from uracil: step 1/1. With respect to regulation, allosterically activated by GTP. Catalyzes the conversion of uracil and 5-phospho-alpha-D-ribose 1-diphosphate (PRPP) to UMP and diphosphate. The sequence is that of Uracil phosphoribosyltransferase from Paraburkholderia xenovorans (strain LB400).